We begin with the raw amino-acid sequence, 1183 residues long: PAN2-PAN3 deadenylation complex catalytic subunit PAN2 (1183 aa).

Positions 1-24 (MDGWTEISRIAATTQPPKGPSPHI) are disordered. 3 WD repeats span residues 159–207 (DLNK…SIKS), 269–309 (PFPA…NVFL), and 327–366 (SKAP…STIT). Residues 369–520 (FVNFPASIEQ…FQYKVPLSRK (152 aa)) form a linker region. The USP domain occupies 521-919 (KIPNCYSRLQ…KPVILVYHDS (399 aa)). Residues 977–1151 (IAIDAEFVNL…EDAYTALLLY (175 aa)) form the Exonuclease domain. Positions 980, 982, 1090, and 1143 each coordinate a divalent metal cation.

Belongs to the peptidase C19 family. PAN2 subfamily. Forms a heterotrimer with an asymmetric homodimer of the regulatory subunit PAN3 to form the poly(A)-nuclease (PAN) deadenylation complex. The cofactor is a divalent metal cation.

Its subcellular location is the cytoplasm. The catalysed reaction is Exonucleolytic cleavage of poly(A) to 5'-AMP.. Positively regulated by the regulatory subunit PAN3. Catalytic subunit of the poly(A)-nuclease (PAN) deadenylation complex, one of two cytoplasmic mRNA deadenylases involved in mRNA turnover. PAN specifically shortens poly(A) tails of RNA and the activity is stimulated by poly(A)-binding protein PAB1. PAN deadenylation is followed by rapid degradation of the shortened mRNA tails by the CCR4-NOT complex. Deadenylated mRNAs are then degraded by two alternative mechanisms, namely exosome-mediated 3'-5' exonucleolytic degradation, or deadenylation-dependent mRNA decaping and subsequent 5'-3' exonucleolytic degradation by XRN1. May also be involved in post-transcriptional maturation of mRNA poly(A) tails. In Scheffersomyces stipitis (strain ATCC 58785 / CBS 6054 / NBRC 10063 / NRRL Y-11545) (Yeast), this protein is PAN2-PAN3 deadenylation complex catalytic subunit PAN2.